Consider the following 405-residue polypeptide: S-adenosylmethionine synthase (405 aa).

Residue His-22 participates in ATP binding. Mg(2+) is bound at residue Asp-24. A K(+)-binding site is contributed by Glu-50. Residues Glu-63 and Gln-107 each coordinate L-methionine. Residues 107–117 (QSPDIAQGVDR) are flexible loop. ATP is bound by residues 184–186 (DGK), 250–251 (RF), Asp-259, 265–266 (RK), Ala-282, and Lys-286. Residue Asp-259 coordinates L-methionine. Lys-290 provides a ligand contact to L-methionine.

Belongs to the AdoMet synthase family. In terms of assembly, homotetramer; dimer of dimers. Mg(2+) is required as a cofactor. K(+) serves as cofactor.

It localises to the cytoplasm. The catalysed reaction is L-methionine + ATP + H2O = S-adenosyl-L-methionine + phosphate + diphosphate. It participates in amino-acid biosynthesis; S-adenosyl-L-methionine biosynthesis; S-adenosyl-L-methionine from L-methionine: step 1/1. In terms of biological role, catalyzes the formation of S-adenosylmethionine (AdoMet) from methionine and ATP. The overall synthetic reaction is composed of two sequential steps, AdoMet formation and the subsequent tripolyphosphate hydrolysis which occurs prior to release of AdoMet from the enzyme. The polypeptide is S-adenosylmethionine synthase (Roseiflexus sp. (strain RS-1)).